Reading from the N-terminus, the 247-residue chain is Granzyme B (247 aa).

An N-terminal signal peptide occupies residues 1 to 18 (MQPILLLLAFLLLPRADA). Residues 19 to 20 (GE) constitute a propeptide, activation peptide. The region spanning 21-245 (IIGGHEAKPH…FVHWIKKTMK (225 aa)) is the Peptidase S1 domain. An intrachain disulfide couples Cys-49 to Cys-65. His-64 (charge relay system) is an active-site residue. N-linked (GlcNAc...) asparagine glycosylation is found at Asn-71 and Asn-104. Residue Asp-108 is the Charge relay system of the active site. Intrachain disulfides connect Cys-142/Cys-209 and Cys-173/Cys-188. Ser-203 (charge relay system) is an active-site residue.

This sequence belongs to the peptidase S1 family. Granzyme subfamily.

Its subcellular location is the secreted. It is found in the cytolytic granule. It catalyses the reaction Preferential cleavage: -Asp-|-Xaa- &gt;&gt; -Asn-|-Xaa- &gt; -Met-|-Xaa-, -Ser-|-Xaa-.. With respect to regulation, inactivated by the serine protease inhibitor diisopropylfluorophosphate. In terms of biological role, abundant protease in the cytosolic granules of cytotoxic T-cells and NK-cells which activates caspase-independent pyroptosis when delivered into the target cell through the immunological synapse. It cleaves after Asp. Once delivered into the target cell, acts by catalyzing cleavage of gasdermin-E (GSDME), releasing the pore-forming moiety of GSDME, thereby triggering pyroptosis and target cell death. Seems to be linked to an activation cascade of caspases (aspartate-specific cysteine proteases) responsible for apoptosis execution. Cleaves caspase-3, -9 and -10 (CASP3, CASP9 and CASP10, respectively) to give rise to active enzymes mediating apoptosis. Cleaves and activates CASP7 in response to bacterial infection, promoting plasma membrane repair. The protein is Granzyme B of Homo sapiens (Human).